We begin with the raw amino-acid sequence, 107 residues long: uncharacterized protein (107 aa).

This is an uncharacterized protein from Homo sapiens (Human).